The chain runs to 153 residues: Small ribosomal subunit protein uS9 (153 aa).

A compositionally biased stretch (low complexity) spans 1 to 19 (MTAPADEAPAVEDAPVAED). Disordered stretches follow at residues 1-23 (MTAPADEAPAVEDAPVAEDIAPV) and 121-153 (LKKAGMLTRDSREKERKKYGLKKARKAPQYSKR). Over residues 129 to 138 (RDSREKERKK) the composition is skewed to basic and acidic residues. The segment covering 139 to 153 (YGLKKARKAPQYSKR) has biased composition (basic residues).

The protein belongs to the universal ribosomal protein uS9 family.

The polypeptide is Small ribosomal subunit protein uS9 (Saccharopolyspora erythraea (strain ATCC 11635 / DSM 40517 / JCM 4748 / NBRC 13426 / NCIMB 8594 / NRRL 2338)).